We begin with the raw amino-acid sequence, 320 residues long: Cytochrome f (320 aa).

Positions 1–35 are cleaved as a signal peptide; the sequence is MQTRNTFSSIKEEITRSISVSLMIYIITWAPVSNA. Heme contacts are provided by tyrosine 36, cysteine 56, cysteine 59, and histidine 60. The helical transmembrane segment at 286–306 threads the bilayer; sequence VQGLLFFFASVILAQIFLVLK.

Belongs to the cytochrome f family. As to quaternary structure, the 4 large subunits of the cytochrome b6-f complex are cytochrome b6, subunit IV (17 kDa polypeptide, petD), cytochrome f and the Rieske protein, while the 4 small subunits are PetG, PetL, PetM and PetN. The complex functions as a dimer. Heme is required as a cofactor.

It is found in the plastid. The protein localises to the chloroplast thylakoid membrane. Component of the cytochrome b6-f complex, which mediates electron transfer between photosystem II (PSII) and photosystem I (PSI), cyclic electron flow around PSI, and state transitions. The sequence is that of Cytochrome f from Cucumis sativus (Cucumber).